A 362-amino-acid polypeptide reads, in one-letter code: sn-glycerol-3-phosphate import ATP-binding protein UgpC (362 aa).

Residues 4-235 (LKLQAVTKSY…PATLFVASFI (232 aa)) form the ABC transporter domain. 37-44 (GPSGCGKS) provides a ligand contact to ATP.

The protein belongs to the ABC transporter superfamily. sn-glycerol-3-phosphate importer (TC 3.A.1.1.3) family. As to quaternary structure, the complex is composed of two ATP-binding proteins (UgpC), two transmembrane proteins (UgpA and UgpE) and a solute-binding protein (UgpB).

The protein resides in the cell inner membrane. It catalyses the reaction sn-glycerol 3-phosphate(out) + ATP + H2O = sn-glycerol 3-phosphate(in) + ADP + phosphate + H(+). Part of the ABC transporter complex UgpBAEC involved in sn-glycerol-3-phosphate (G3P) import. Responsible for energy coupling to the transport system. In Yersinia enterocolitica serotype O:8 / biotype 1B (strain NCTC 13174 / 8081), this protein is sn-glycerol-3-phosphate import ATP-binding protein UgpC.